A 168-amino-acid chain; its full sequence is MASVAAAAVSVPSFSGLKAETKAAPARLSSTSVVRMAPVVRASASSDALKTVGKALLAASSSLLLVASANAATVKMGGDDGALGFYPKDISVAAGESVTFVNNKGFPHNVVFDEDAVPAGVKTEDINHEDYLNGPNESFSITFKTPGTYEFYCEPHQGAGMKGVVTVS.

A chloroplast-targeting transit peptide spans 1–70; that stretch reads MASVAAAAVS…SSLLLVASAN (70 aa). The Plastocyanin-like domain occupies 71-168; the sequence is AATVKMGGDD…AGMKGVVTVS (98 aa). Cu cation-binding residues include His-108, Cys-153, His-156, and Met-161.

Belongs to the plastocyanin family. Cu(2+) is required as a cofactor.

The protein resides in the plastid. The protein localises to the chloroplast thylakoid membrane. Participates in electron transfer between P700 and the cytochrome b6-f complex in photosystem I. This chain is Plastocyanin, chloroplastic (PETE), found in Physcomitrium patens (Spreading-leaved earth moss).